The following is a 537-amino-acid chain: P2Y purinoceptor 4 (537 aa).

Over 1-49 (MTEDIMATSYPTFLTTPYLPMKLLMNLTNDTEDICVFDEGFKFLLLPVS) the chain is Extracellular. Asn-26 and Asn-29 each carry an N-linked (GlcNAc...) asparagine glycan. The helical transmembrane segment at 50–70 (YSAVFMVGLPLNIAAMWIFIA) threads the bilayer. The Cytoplasmic portion of the chain corresponds to 71–79 (KMRPWNPTT). The helical transmembrane segment at 80–100 (VYMFNLALSDTLYVLSLPTLV) threads the bilayer. The Extracellular segment spans residues 101–118 (YYYADKNNWPFGEVLCKL). Cysteines 116 and 193 form a disulfide. Residues 119-139 (VRFLFYANLYSSILFLTCISV) traverse the membrane as a helical segment. The Cytoplasmic portion of the chain corresponds to 140–161 (HRYRGVCHPITSLRRMNAKHAY). Residues 162–182 (VICALVWLSVTLCLVPNLIFV) traverse the membrane as a helical segment. The Extracellular segment spans residues 183-210 (TVSPKVKNTICHDTTRPEDFARYVEYST). The helical transmembrane segment at 211–231 (AIMCLLFGIPCLIIAGCYGLM) threads the bilayer. Topologically, residues 232–254 (TRELMKPIVSGNQQTLPSYKKRS) are cytoplasmic. The chain crosses the membrane as a helical span at residues 255 to 275 (IKTIIFVMIAFAICFMPFHIT). Residues 276-292 (RTLYYYARLLGIKCYAL) lie on the Extracellular side of the membrane. The chain crosses the membrane as a helical span at residues 293–316 (NVINVTYKVTRPLASANSCIDPIL). At 317 to 537 (YFLANDRYRR…EKELQNFPKA (221 aa)) the chain is on the cytoplasmic side. The segment at 401 to 505 (NRRSTIKRNS…GEGTSTWNLL (105 aa)) is disordered. 2 stretches are compositionally biased toward basic and acidic residues: residues 409–423 (NSTD…RHGE) and 431–447 (VVEK…RKTT). Residues 448 to 465 (EQSSKTNAEQDELQTQID) are compositionally biased toward polar residues.

This sequence belongs to the G-protein coupled receptor 1 family.

Its subcellular location is the cell membrane. Functionally, receptor for extracellular ATP, UTP, CTP, GTP and ITP. The activity of this receptor is mediated by G proteins which activate a phosphatidylinositol-calcium second messenger system. May play a key role in the early development of neural tissue. This Xenopus laevis (African clawed frog) protein is P2Y purinoceptor 4 (p2ry4).